The sequence spans 354 residues: Glutamine synthetase (354 aa).

Residues 22 to 101 form the GS beta-grasp domain; the sequence is FHAEYVWIDG…VLSETYNNDG (80 aa). In terms of domain architecture, GS catalytic spans 108 to 354; it reads HRHHTAKVME…IIIETTILDK (247 aa).

Belongs to the glutamine synthetase family. As to quaternary structure, homooctamer.

The protein resides in the cytoplasm. It catalyses the reaction L-glutamate + NH4(+) + ATP = L-glutamine + ADP + phosphate + H(+). In Amanita muscaria (Fly agaric), this protein is Glutamine synthetase (GLN1).